Consider the following 62-residue polypeptide: Temporin-CDYb (62 aa).

Positions 1-22 (MFTLKKSLLLLFFLGTINLSLC) are cleaved as a signal peptide. Residues 23 to 45 (EEERDADEEERRDDPEERAVQVE) constitute a propeptide that is removed on maturation. At Leu-60 the chain carries Leucine amide.

Belongs to the frog skin active peptide (FSAP) family. Temporin subfamily. Expressed by the skin glands.

Its subcellular location is the secreted. Functionally, antimicrobial peptide. Has low activity against the Gram-positive bacterium S.aureus (MIC&gt;100 uM) and the Gram-negative bacterium E.coli (MIC&gt;100 uM). Has weak hemolytic activity against human erythrocytes. The polypeptide is Temporin-CDYb (Rana dybowskii (Dybovsky's frog)).